A 1255-amino-acid polypeptide reads, in one-letter code: MLGVINRMAKKFNYKLPSMVALTLVGSAVTAHQVQAAETTQDQTTNKNVLDSNKVKATTEQAKAEVKNPTQNISGTQVYQDPAIVQPKTANNKTGNAQVSQKVDTAQVNGDTRANQSATTNNTQPVAKSTSTTAPKTNTNVTNAGYSLVDDEDDNSEHQINPELIKSAAKPAALETQYKAAAPKAKTEATPKVTTFSASAQPRSVAATPKTSLPKYKPQVNSSINDYIRKNNLKAPKIEEDYTSYFPKYAYRNGVGRPEGIVVHDTANDRSTINGEISYMKNNYQNAFVHAFVDGDRIIETAPTDYLSWGVGAVGNPRFINVEIVHTHDYASFARSMNNYADYAATQLQYYGLKPDSAEYDGNGTVWTHYAVSKYLGGTDHADPHGYLRSHNYSYDQLYDLINEKYLIKMGKVAPWGTQFTTTPTTPSKPTTPSKPSTGKLTVAANNGVAQIKPTNSGLYTTVYDKTGKATNEVQKTFAVSKTATLGNQKFYLVQDYNSGNKFGWVKEGDVVYNTAKSPVNVNQSYSIKSGTKLYTVPWGTSKQVAGSVSGSGNQTFKASKQQQIDKSIYLYGSVNGKSGWVSKAYLVDTAKPTPTPIPKPSTPTTNNKLTVSSLNGVAQINAKNNGLFTTVYDKTGKPTKEVQKTFAVTKEASLGGNKFYLVKDYNSPTLIGWVKQGDVIYNNAKSPVNVMQTYTVKPGTKLYSVPWGTYKQEAGAVSGTGNQTFKATKQQQIDKSIYLFGTVNGKSGWVSKAYLAVPAAPKKAVAQPKTAVKAYTVTKPQTTQTVSKIAQVKPNNTGIRASVYEKTAKNGAKYADRTFYVTKERAHGNETYVLLNNTSHNIPLGWFNVKDLNVQNLGKEVKTTQKYTVNKSNNGLSMVPWGTKNQVILTGNNIAQGTFNATKQVSVGKDVYLYGTINNRTGWVNAKDLTAPTAVKPTTSAAKDYNYTYVIKNGNGYYYVTPNSDTAKYSLKAFNEQPFAVVKEQVINGQTWYYGKLSNGKLAWIKSTDLAKELIKYNQTGMTLNQVAQIQAGLQYKPQVQRVPGKWTDANFNDVKHAMDTKRLAQDPALKYQFLRLDQPQNISIDKINQFLKGKGVLENQGAAFNKAAQMYGINEVYLISHALLETGNGTSQLAKGADVVNNKVVTNSNTKYHNVFGIAAYDNDPLREGIKYAKQAGWDTVSKAIVGGAKFIGNSYVKAGQNTLYKMRWNPAHPGTHQYATDVDWANINAKIIKGYYDKIGEVGKYFDIPQYK.

An N-terminal signal peptide occupies residues 1–36 (MLGVINRMAKKFNYKLPSMVALTLVGSAVTAHQVQA). Disordered stretches follow at residues 110–141 (GDTR…NTNV) and 193–218 (VTTF…KYKP). The interval 199-775 (SAQPRSVAAT…VAQPKTAVKA (577 aa)) is N-acetylmuramoyl-L-alanine amidase. GW domains follow at residues 442-516 (TVAA…YNTA), 518-592 (SPVN…DTAK), 611-685 (TVSS…YNNA), 687-761 (SPVN…VPAA), 783-858 (TTQT…VQNL), 860-935 (KEVK…APTA), and 942-1016 (AAKD…KELI). An endo-beta-N-acetylglucosaminidase region spans residues 776–1255 (YTVTKPQTTQ…GKYFDIPQYK (480 aa)).

The protein in the N-terminal section; belongs to the N-acetylmuramoyl-L-alanine amidase 2 family. This sequence in the C-terminal section; belongs to the glycosyl hydrolase 73 family. Oligomer; forms a ring structure at the cell surface which is important for efficient partitioning of daughter cells after cell division. Undergoes proteolytic processing to generate the two extracellular lytic enzymes, probably at the septal region on the cell surface.

It localises to the secreted. It catalyses the reaction Hydrolyzes the link between N-acetylmuramoyl residues and L-amino acid residues in certain cell-wall glycopeptides.. It carries out the reaction an N(4)-(oligosaccharide-(1-&gt;3)-[oligosaccharide-(1-&gt;6)]-beta-D-Man-(1-&gt;4)-beta-D-GlcNAc-(1-&gt;4)-alpha-D-GlcNAc)-L-asparaginyl-[protein] + H2O = an oligosaccharide-(1-&gt;3)-[oligosaccharide-(1-&gt;6)]-beta-D-Man-(1-&gt;4)-D-GlcNAc + N(4)-(N-acetyl-beta-D-glucosaminyl)-L-asparaginyl-[protein]. Its function is as follows. Endohydrolysis of the di-N-acetylchitobiosyl unit in high-mannose glycopeptides and glycoproteins containing the -[(Man)5(GlcNAc)2]-Asn structure. One N-acetyl-D-glucosamine residue remains attached to the protein; the rest of the oligosaccharide is released intact. Cleaves the peptidoglycan connecting the daughter cells at the end of the cell division cycle, resulting in the separation of the two newly divided cells. Acts as an autolysin in penicillin-induced lysis. The polypeptide is Bifunctional autolysin (atl) (Staphylococcus aureus (strain Mu3 / ATCC 700698)).